Reading from the N-terminus, the 179-residue chain is Replication restart protein DnaT (179 aa).

The segment at 156-179 (GGLPKRDVNTVSEPDSQIPPGFRG) is disordered.

This sequence belongs to the DnaT family. In terms of assembly, homooligomerizes. Interacts with PriB. Component of the replication restart primosome. Primosome assembly occurs via a 'hand-off' mechanism. PriA binds to replication forks, subsequently PriB then DnaT bind; DnaT then displaces ssDNA to generate the helicase loading substrate.

Its function is as follows. Involved in the restart of stalled replication forks, which reloads the replicative helicase on sites other than the origin of replication. Can function in multiple replication restart pathways. Displaces ssDNA from a PriB-ssDNA complex. Probably forms a spiral filament on ssDNA. This chain is Replication restart protein DnaT, found in Escherichia coli O81 (strain ED1a).